The sequence spans 203 residues: NADH-quinone oxidoreductase subunit C (203 aa).

The protein belongs to the complex I 30 kDa subunit family. As to quaternary structure, NDH-1 is composed of 14 different subunits. Subunits NuoB, C, D, E, F, and G constitute the peripheral sector of the complex.

The protein localises to the cell inner membrane. The catalysed reaction is a quinone + NADH + 5 H(+)(in) = a quinol + NAD(+) + 4 H(+)(out). Its function is as follows. NDH-1 shuttles electrons from NADH, via FMN and iron-sulfur (Fe-S) centers, to quinones in the respiratory chain. The immediate electron acceptor for the enzyme in this species is believed to be ubiquinone. Couples the redox reaction to proton translocation (for every two electrons transferred, four hydrogen ions are translocated across the cytoplasmic membrane), and thus conserves the redox energy in a proton gradient. The polypeptide is NADH-quinone oxidoreductase subunit C (Polaromonas sp. (strain JS666 / ATCC BAA-500)).